A 302-amino-acid polypeptide reads, in one-letter code: Cuticle collagen 40 (302 aa).

Disordered regions lie at residues 79 to 103 (RIKR…GGGG) and 119 to 302 (AGAP…APGY). Gly residues predominate over residues 91–103 (YAEGGAAAGGGGG). Triple-helical region regions lie at residues 114 to 143 (GAAG…AGSD), 162 to 185 (GPAG…DGNT), 189 to 221 (GGEG…PGQV), 226 to 252 (GTPG…AGAS), and 255 to 290 (GPAG…GGGC). The span at 137 to 154 (PGTAGSDAEAAAAPTASD) shows a compositional bias: low complexity. The span at 194-203 (AGPPGPPGPA) shows a compositional bias: pro residues. Low complexity-rich tracts occupy residues 205 to 234 (NPGT…AGAA) and 245 to 281 (NPGS…PGEA). The segment covering 293–302 (CPPPRTAPGY) has biased composition (pro residues).

This sequence belongs to the cuticular collagen family. Collagen polypeptide chains are complexed within the cuticle by disulfide bonds and other types of covalent cross-links.

In terms of biological role, nematode cuticles are composed largely of collagen-like proteins. The cuticle functions both as an exoskeleton and as a barrier to protect the worm from its environment. This Caenorhabditis elegans protein is Cuticle collagen 40 (col-40).